Here is a 294-residue protein sequence, read N- to C-terminus: Formate dehydrogenase, nitrate-inducible, iron-sulfur subunit (294 aa).

The Periplasmic segment spans residues 1–256 (MAMETQDIIK…DTSVSLWKGA (256 aa)). 4Fe-4S ferredoxin-type domains are found at residues 30 to 58 (VAKL…IRDE), 91 to 123 (LEWL…QYAN), 124 to 153 (GIVD…LNKE), and 158 to 189 (YKCT…FGTK). [4Fe-4S] cluster is bound by residues C39, C42, C45, C49, C100, C103, C108, C112, C133, C136, C139, C143, C160, C163, C175, and C179. The helical transmembrane segment at 257–279 (LKPLAAAGFIATFAGLIFHYIGI) threads the bilayer. At 280 to 294 (GPNKEVDDDEEDHHE) the chain is on the cytoplasmic side.

In terms of assembly, trimer of heterotrimers, consisting of subunits alpha, beta and gamma. The cofactor is [4Fe-4S] cluster.

The protein localises to the cell inner membrane. In terms of biological role, formate dehydrogenase allows E.coli to use formate as major electron donor during anaerobic respiration, when nitrate is used as electron acceptor. The beta subunit FdnH is an electron transfer unit containing 4 iron-sulfur clusters; it serves as a conduit for electrons that are transferred from the formate oxidation site in the alpha subunit (FdnG) to the menaquinone associated with the gamma subunit (FdnI) of formate dehydrogenase-N. Formate dehydrogenase-N is part of a system that generates proton motive force, together with the dissimilatory nitrate reductase (Nar). This Escherichia coli (strain K12) protein is Formate dehydrogenase, nitrate-inducible, iron-sulfur subunit (fdnH).